A 339-amino-acid polypeptide reads, in one-letter code: Uridylate kinase PUMPKIN, chloroplastic (339 aa).

The N-terminal 53 residues, 1–53, are a transit peptide targeting the chloroplast; the sequence is MAIPLPLTSCSPISTSSSISRTSFVPLTLRNRTFFSNQNYSRRVLISCSSSLS. Low complexity predominate over residues 52-79; the sequence is LSSDNGSSPDSMNGNGNGNGSSLNGQSS. The tract at residues 52 to 89 is disordered; the sequence is LSSDNGSSPDSMNGNGNGNGSSLNGQSSFPRLPSFDGT. ATP is bound at residue 102–105; the sequence is KVSG. The interval 110 to 115 is involved in allosteric activation by GTP; sequence GDEEQN. Position 144 (G144) interacts with UMP. The ATP site is built by G145 and R149. D165 is a UMP binding site. Residues 180-184 and 189-191 each bind ATP; these read QATME and PTR. Position 226-233 (226-233) interacts with UMP; it reads TGNPFFTT. ATP is bound by residues T253, F259, and D262.

This sequence belongs to the UMP kinase family. Homomultimer. Homohexamer. Forms RNA-containing megadalton-sized complexes. In terms of tissue distribution, expressed exclusively in leaves, but not in roots.

Its subcellular location is the plastid. The protein resides in the chloroplast stroma. The catalysed reaction is UMP + ATP = UDP + ADP. The protein operates within pyrimidine metabolism; CTP biosynthesis via de novo pathway; UDP from UMP (UMPK route): step 1/1. Its function is as follows. Catalyzes the reversible phosphorylation of UMP to UDP. Required for specific post-transcriptional processes of many plastid transcripts (e.g. PSI (PsaA, PsaF), PSII (D1, CP43, CP47), Cytochrome b(6)f (Cytb(6)), ATP synthase (AtpC), LHCs (LHCa3, LHCb2), and NDH (NdhH)), thus being essential for retaining photosynthetic activity in chloroplasts. Associates with group II introns of the plastid transcripts trnG-UCC, trnV-UAC, petB, petD and ndhA to stabilize corresponding precursor RNAs. The sequence is that of Uridylate kinase PUMPKIN, chloroplastic from Arabidopsis thaliana (Mouse-ear cress).